Reading from the N-terminus, the 210-residue chain is UPF0637 protein RBAM_014510 (210 aa).

The protein belongs to the UPF0637 family.

This is UPF0637 protein RBAM_014510 from Bacillus velezensis (strain DSM 23117 / BGSC 10A6 / LMG 26770 / FZB42) (Bacillus amyloliquefaciens subsp. plantarum).